We begin with the raw amino-acid sequence, 322 residues long: Germ cell-specific gene 1-like protein (322 aa).

Over 1–8 the chain is Cytoplasmic; that stretch reads MKTSRRGR. A helical membrane pass occupies residues 9–29; that stretch reads ALLAVALNLLALLFATTAFLT. Residues 30 to 122 lie on the Extracellular side of the membrane; the sequence is TYWCQGTQRV…FIDLAPASEK (93 aa). A helical membrane pass occupies residues 123 to 143; sequence GVLWLSVVSEVLYILLLVVGF. Residues 144 to 163 are Cytoplasmic-facing; sequence SLMCLELLHSSSVIDGLKLN. Residues 164-184 form a helical membrane-spanning segment; sequence AFAAVFTVLSGLLGMVAHMMY. Over 185–207 the chain is Extracellular; sequence TQVFQVTVSLGPEDWRPHSWDYG. A helical transmembrane segment spans residues 208–228; the sequence is WSFCLAWGSFTCCMAASVTTL. The Cytoplasmic segment spans residues 229-322; it reads NSYTKTVIEF…RQCWVLGHWV (94 aa). Residue Ser-274 is modified to Phosphoserine.

Belongs to the GSG1 family. Component of the inner core of AMPAR complexes. AMPAR complexes consist of an inner core made of 4 pore-forming GluA/GRIA proteins (GRIA1, GRIA2, GRIA3 and GRIA4) and 4 major auxiliary subunits arranged in a twofold symmetry. One of the two pairs of distinct binding sites is occupied either by CNIH2, CNIH3 or CACNG2, CACNG3. The other harbors CACNG2, CACNG3, CACNG4, CACNG8 or GSG1L. This inner core of AMPAR complexes is complemented by outer core constituents binding directly to the GluA/GRIA proteins at sites distinct from the interaction sites of the inner core constituents. Outer core constituents include at least PRRT1, PRRT2, CKAMP44/SHISA9, FRRS1L and NRN1. The proteins of the inner and outer core serve as a platform for other, more peripherally associated AMPAR constituents. Alone or in combination, these auxiliary subunits control the gating and pharmacology of the AMPAR complexes and profoundly impact their biogenesis and protein processing. In terms of tissue distribution, expressed in the brain (at protein level).

The protein localises to the cell membrane. It localises to the synapse. Functionally, as a component of the inner core of AMPAR complexes, modifies AMPA receptor (AMPAR) gating. This Rattus norvegicus (Rat) protein is Germ cell-specific gene 1-like protein (Gsg1l).